Here is a 368-residue protein sequence, read N- to C-terminus: Peptidoglycan-recognition protein LA (368 aa).

Over 1–127 (MFEENNSPTT…KSPSRRVTRN (127 aa)) the chain is Cytoplasmic. Disordered regions lie at residues 21–46 (QRAS…GLPL) and 101–122 (INSN…SPSR). Composition is skewed to low complexity over residues 33 to 43 (TSAGSSTSSSG) and 102 to 113 (NSNNANGNGNAN). The helical transmembrane segment at 128–148 (TILLITLILLVLATGLIVLYV) threads the bilayer. Over 149-368 (ELNRPKPELP…MKTESWDAKQ (220 aa)) the chain is Extracellular. Cysteines 221 and 227 form a disulfide. The N-acetylmuramoyl-L-alanine amidase domain occupies 233-320 (TIQDSAIAEK…DVDYKLVAQN (88 aa)). N-linked (GlcNAc...) asparagine glycans are attached at residues Asn-273 and Asn-320.

It belongs to the N-acetylmuramoyl-L-alanine amidase 2 family. Expressed in uninduced hemocytes and mbn-2 cells.

The protein resides in the cell membrane. Its function is as follows. Peptidoglycan-recognition protein probably involved in innate immunity by binding to peptidoglycans (PGN) of bacteria and activating the immune response. The polypeptide is Peptidoglycan-recognition protein LA (PGRP-LA) (Drosophila melanogaster (Fruit fly)).